The following is a 311-amino-acid chain: tRNA-cytidine(32) 2-sulfurtransferase (311 aa).

Residues 47 to 52 (SGGKDS) carry the PP-loop motif motif. Cys-122, Cys-125, and Cys-213 together coordinate [4Fe-4S] cluster.

This sequence belongs to the TtcA family. As to quaternary structure, homodimer. The cofactor is Mg(2+). [4Fe-4S] cluster serves as cofactor.

Its subcellular location is the cytoplasm. It catalyses the reaction cytidine(32) in tRNA + S-sulfanyl-L-cysteinyl-[cysteine desulfurase] + AH2 + ATP = 2-thiocytidine(32) in tRNA + L-cysteinyl-[cysteine desulfurase] + A + AMP + diphosphate + H(+). It participates in tRNA modification. In terms of biological role, catalyzes the ATP-dependent 2-thiolation of cytidine in position 32 of tRNA, to form 2-thiocytidine (s(2)C32). The sulfur atoms are provided by the cysteine/cysteine desulfurase (IscS) system. The polypeptide is tRNA-cytidine(32) 2-sulfurtransferase (Salmonella paratyphi A (strain ATCC 9150 / SARB42)).